Reading from the N-terminus, the 222-residue chain is Thymidylate kinase (222 aa).

Residues 29-34 (RVGKST) and arginine 111 each bind ATP. The LID stretch occupies residues 146–170 (LSMSSEDATKRGEYGGERYEKLEFQ).

Belongs to the thymidylate kinase family. As to quaternary structure, homodimer. Requires Mg(2+) as cofactor.

It catalyses the reaction dTMP + ATP = dTDP + ADP. It functions in the pathway pyrimidine metabolism; dTTP biosynthesis. In terms of biological role, catalyzes the phosphorylation of thymidine monophosphate (dTMP) to thymidine diphosphate (dTDP), the immediate precursor for the DNA building block dTTP, with ATP as the preferred phosphoryl donor in the presence of Mg(2+). This chain is Thymidylate kinase (dtymk), found in Dictyostelium discoideum (Social amoeba).